The following is a 238-amino-acid chain: Ribonuclease PH (238 aa).

Phosphate contacts are provided by residues Arg86 and 124–126 (GTR).

The protein belongs to the RNase PH family. In terms of assembly, homohexameric ring arranged as a trimer of dimers.

It carries out the reaction tRNA(n+1) + phosphate = tRNA(n) + a ribonucleoside 5'-diphosphate. Functionally, phosphorolytic 3'-5' exoribonuclease that plays an important role in tRNA 3'-end maturation. Removes nucleotide residues following the 3'-CCA terminus of tRNAs; can also add nucleotides to the ends of RNA molecules by using nucleoside diphosphates as substrates, but this may not be physiologically important. Probably plays a role in initiation of 16S rRNA degradation (leading to ribosome degradation) during starvation. In Pectobacterium atrosepticum (strain SCRI 1043 / ATCC BAA-672) (Erwinia carotovora subsp. atroseptica), this protein is Ribonuclease PH.